Here is a 1685-residue protein sequence, read N- to C-terminus: Phosphatidylinositol 4-phosphate 3-kinase C2 domain-containing subunit alpha (1685 aa).

Disordered stretches follow at residues 1-33 (MAQI…EALQ) and 41-60 (KLQK…LSSS). Alanine 2 bears the N-acetylalanine mark. The interval 2-142 (AQISSNSGFK…FRPTIQRGQW (141 aa)) is interaction with clathrin; sufficient to induce clathrin assembly. Positions 19-31 (EPTRAKDVDKEEA) are enriched in basic and acidic residues. Residues 49 to 60 (TDNQRGFELSSS) show a composition bias toward polar residues. A phosphoserine mark is found at serine 60, serine 108, serine 259, serine 327, and serine 338. One can recognise a PI3K-RBD domain in the interval 419-507 (NASVKVSIDI…DTEIRLQLLT (89 aa)). The residue at position 628 (serine 628) is a Phosphoserine. The region spanning 680 to 839 (TTEQLQFTIF…ERIVLQVDFP (160 aa)) is the C2 PI3K-type domain. The region spanning 859–1035 (QHNLETLEND…EHVLGALLSV (177 aa)) is the PIK helical domain. The 279-residue stretch at 1103–1381 (SIKSCSFFSS…LIESSLGSIA (279 aa)) folds into the PI3K/PI4K catalytic domain. Residues 1109 to 1115 (FFSSNAV) are G-loop. The interval 1245-1253 (GICDRHNDN) is catalytic loop. Residues 1264 to 1290 (HIDFGKFLGHAQMFGTFKRDRAPFVLT) form an activation loop region. The PX domain maps to 1420 to 1536 (GRIKEVSVFT…TFFHPLLRDE (117 aa)). The segment at 1486–1491 (RMVLGR) is interaction with PtdIns(4,5)P2-containing membranes. Position 1551 is a phosphoserine (serine 1551). One can recognise a C2 domain in the interval 1554–1677 (TPGQIGGAVK…NLSKETVKWY (124 aa)). Positions 1607-1618 (SKRKTKISRKTR) match the Nuclear localization signal motif.

It belongs to the PI3/PI4-kinase family. As to quaternary structure, part of a complex with ERBB2 and EGFR. Interacts with clathrin trimers. Interacts with SBF2/MTMR13. It depends on Ca(2+) as a cofactor. The cofactor is Mg(2+). Phosphorylated on Ser-259 during mitosis and upon UV irradiation; which does not change enzymatic activity but leads to proteasomal degradation. Phosphorylated upon insulin stimulation; which may lead to enzyme activation.

It is found in the cell membrane. The protein resides in the cytoplasmic vesicle. The protein localises to the clathrin-coated vesicle. Its subcellular location is the nucleus. It localises to the cytoplasm. It is found in the golgi apparatus. The protein resides in the trans-Golgi network. It catalyses the reaction a 1,2-diacyl-sn-glycero-3-phospho-(1D-myo-inositol 4-phosphate) + ATP = a 1,2-diacyl-sn-glycero-3-phospho-(1D-myo-inositol-3,4-bisphosphate) + ADP + H(+). The enzyme catalyses a 1,2-diacyl-sn-glycero-3-phospho-(1D-myo-inositol) + ATP = a 1,2-diacyl-sn-glycero-3-phospho-(1D-myo-inositol-3-phosphate) + ADP + H(+). It carries out the reaction a 1,2-diacyl-sn-glycero-3-phospho-(1D-myo-inositol-4,5-bisphosphate) + ATP = a 1,2-diacyl-sn-glycero-3-phospho-(1D-myo-inositol-3,4,5-trisphosphate) + ADP + H(+). Its activity is regulated as follows. Only slightly inhibited by wortmannin and LY294002. Activated by clathrin and insulin. Functionally, generates phosphatidylinositol 3-phosphate (PtdIns3P) and phosphatidylinositol 3,4-bisphosphate (PtdIns(3,4)P2) that act as second messengers. Has a role in several intracellular trafficking events. Functions in insulin signaling and secretion. Required for translocation of the glucose transporter SLC2A4/GLUT4 to the plasma membrane and glucose uptake in response to insulin-mediated RHOQ activation. Regulates insulin secretion through two different mechanisms: involved in glucose-induced insulin secretion downstream of insulin receptor in a pathway that involves AKT1 activation and TBC1D4/AS160 phosphorylation, and participates in the late step of insulin granule exocytosis probably in insulin granule fusion. Synthesizes PtdIns3P in response to insulin signaling. Functions in clathrin-coated endocytic vesicle formation and distribution. Regulates dynamin-independent endocytosis, probably by recruiting EEA1 to internalizing vesicles. In neurosecretory cells synthesizes PtdIns3P on large dense core vesicles. Participates in calcium induced contraction of vascular smooth muscle by regulating myosin light chain (MLC) phosphorylation through a mechanism involving Rho kinase-dependent phosphorylation of the MLCP-regulatory subunit MYPT1. May play a role in the EGF signaling cascade. May be involved in mitosis and UV-induced damage response. Required for maintenance of normal renal structure and function by supporting normal podocyte function. Involved in the regulation of ciliogenesis and trafficking of ciliary components. The polypeptide is Phosphatidylinositol 4-phosphate 3-kinase C2 domain-containing subunit alpha (PIK3C2A) (Pongo abelii (Sumatran orangutan)).